Reading from the N-terminus, the 43-residue chain is Cytin chain A (43 aa).

Belongs to the protease inhibitor I13 (potato type I serine protease inhibitor) family. In terms of assembly, heterodimer of an A chain and a B chain, linked by a disulfide bond.

Inhibitor of chymotrypsin. This is Cytin chain A from Theromyzon tessulatum (Duck leech).